Consider the following 95-residue polypeptide: Opiscorpine-2 (95 aa).

An N-terminal signal peptide occupies residues 1-19 (MNNKLTALIFHGLLAIASC). In terms of domain architecture, BetaSPN-type CS-alpha/beta spans 55-95 (EFMCMANMDPTGSCETHCQKASGEKGYCHGTKCKCGVPLSY). Cystine bridges form between C58–C82, C68–C87, and C72–C89.

This sequence belongs to the long chain scorpion toxin family. Class 3 subfamily. In terms of tissue distribution, expressed by the venom gland.

Its subcellular location is the secreted. Its function is as follows. Has antimicrobial activity against yeasts and bacteria. The protein is Opiscorpine-2 of Opistophthalmus carinatus (African yellow leg scorpion).